Consider the following 233-residue polypeptide: RNA/RNP complex-1-interacting phosphatase homolog (233 aa).

Basic residues predominate over residues 1 to 14 (MSNYHHNHNYQHRP). The tract at residues 1 to 21 (MSNYHHNHNYQHRPRGYERLP) is disordered. In terms of domain architecture, Tyrosine-protein phosphatase spans 34 to 206 (NVGRDIDGTR…LYEAERKKKY (173 aa)). The Phosphocysteine intermediate role is filled by Cys150. 151–156 (THGLNR) is a binding site for substrate. The active-site Proton donor/acceptor is the Arg156. A disordered region spans residues 204 to 233 (KKYGKSSGKSSGNSADSTISSEQLHRNNSQ). Low complexity predominate over residues 208–217 (KSSGKSSGNS). Polar residues predominate over residues 218-233 (ADSTISSEQLHRNNSQ).

It belongs to the protein-tyrosine phosphatase family. Non-receptor class dual specificity subfamily. In terms of assembly, interacts with the ERI/DICER complex component dcr-1. Interacts with ERI/DICER complex components rrf-3 and isoform b of eri-1. Interacts with drh-3 and rde-8.

It localises to the cytoplasm. Its subcellular location is the nucleus. Its function is as follows. RNA polyphosphatase which has RNA 5'-triphosphatase and diphosphatase activities. Displays poor protein-tyrosine phosphatase activity. Binds to 5'-triphosphorylated RNAs (also called ppp-RNAs). Dephosphorylates ppp-RNAs converting them to 5'-monophosphorylated RNAs (also called p-RNAs). During small-RNA-mediated gene-silencing or RNA interference (RNAi), involved in the dcr-1-mediated processing of an amplified dsRNA intermediate. This is most likely in association with several components of the ERI/DICER complex including dcr-1, eri-1 and rrf-3. Plays a role in the biogenesis of 26G small interfering RNAs (26G-siRNAs), which are a class of 26 nucleotide siRNAs that possess a guanine residue at the 5'-end, by dephosphorylating 5'-triphosphorylated 26G-siRNAs prior to their maturation by the ERI/DICER complex. Plays a role in the biogenesis of csr-1-bound 22G small interfering RNAs (22G-siRNAs), which are a class of 22 nucleotide siRNAs that possess a guanine residue at the 5'-end. Not required for the biogenesis of microRNAs (miRNA) or for the biogenesis of a class of 21 nucleotide PIWI-interacting RNAs (piRNAs) that possess a uracil residue at the 5'-end (also called 21U-RNAs). The protein is RNA/RNP complex-1-interacting phosphatase homolog of Caenorhabditis elegans.